A 137-amino-acid chain; its full sequence is Envelope glycoprotein L (137 aa).

The signal sequence occupies residues 1 to 25 (MRTVGVFLATCLVTIFVLPTWGNWA). Residues 23–128 (NWAYPCCHVT…SVEDLFGANL (106 aa)) are interaction with gH. Intrachain disulfides connect C28/C56 and C29/C79.

This sequence belongs to the herpesviridae glycoprotein L family. As to quaternary structure, interacts with glycoprotein H (gH); this interaction is necessary for the correct processing and cell surface expression of gH. The heterodimer gH/gL seems to interact with gB trimers during fusion. The heterodimer gH/gL interacts with host EPHA2 to facilitate virus internalization and fusion.

It localises to the virion membrane. It is found in the host cell membrane. Its subcellular location is the host Golgi apparatus. The protein localises to the host trans-Golgi network. Functionally, the heterodimer glycoprotein H-glycoprotein L is required for the fusion of viral and plasma membranes leading to virus entry into the host cell. Acts as a functional inhibitor of gH and maintains gH in an inhibited form. Upon binding to host integrins, gL dissociates from gH leading to activation of the viral fusion glycoproteins gB and gH. The heterodimer gH/gL targets also host EPHA2 to promote viral entry. In Epstein-Barr virus (strain AG876) (HHV-4), this protein is Envelope glycoprotein L.